Here is a 189-residue protein sequence, read N- to C-terminus: Putative manganese efflux pump MntP (189 aa).

6 consecutive transmembrane segments (helical) span residues 6–26, 39–59, 71–91, 106–126, 131–151, and 169–189; these read IFGIAVALAMDAFAVSIAAGV, LAWHFGLFQALMPIVGWYAGL, WIAFFLLAFVSFNMIRESFDA, LVLLSIATSIDALAVGLSLSV, VWMPATVIGITAAVFTVGGLM, and VGAGVLLFIGLRILYAHGVFY.

This sequence belongs to the MntP (TC 9.B.29) family.

It is found in the cell inner membrane. Its function is as follows. Probably functions as a manganese efflux pump. The polypeptide is Putative manganese efflux pump MntP (Desulfosudis oleivorans (strain DSM 6200 / JCM 39069 / Hxd3) (Desulfococcus oleovorans)).